A 46-amino-acid polypeptide reads, in one-letter code: Sperm protamine P1 (46 aa).

This sequence belongs to the protamine P1 family. In terms of tissue distribution, testis.

It localises to the nucleus. The protein localises to the chromosome. Its function is as follows. Protamines substitute for histones in the chromatin of sperm during the haploid phase of spermatogenesis. They compact sperm DNA into a highly condensed, stable and inactive complex. This Glauconycteris beatrix (Beatrix's bat) protein is Sperm protamine P1 (PRM1).